The sequence spans 275 residues: Small ribosomal subunit protein uS3 (275 aa).

Positions 39 to 107 (VRIYLKKKLK…PVHVNIEEIR (69 aa)) constitute a KH type-2 domain. Residues 216–275 (AAATSAEPAAEEKKTRRAPSKTAARKPAAGTDKPLVAAKPAVKRVRKVETPAADTQKSGE) are disordered.

Belongs to the universal ribosomal protein uS3 family. In terms of assembly, part of the 30S ribosomal subunit. Forms a tight complex with proteins S10 and S14.

Functionally, binds the lower part of the 30S subunit head. Binds mRNA in the 70S ribosome, positioning it for translation. This chain is Small ribosomal subunit protein uS3, found in Polynucleobacter asymbioticus (strain DSM 18221 / CIP 109841 / QLW-P1DMWA-1) (Polynucleobacter necessarius subsp. asymbioticus).